Here is a 514-residue protein sequence, read N- to C-terminus: 2,3-bisphosphoglycerate-independent phosphoglycerate mutase (514 aa).

Mn(2+) is bound by residues Asp14 and Ser64. The active-site Phosphoserine intermediate is the Ser64. Residues His125, 155-156 (RD), Arg187, Arg193, 263-266 (RADR), and Lys336 contribute to the substrate site. The Mn(2+) site is built by Asp403, His407, Asp444, His445, and His463.

It belongs to the BPG-independent phosphoglycerate mutase family. In terms of assembly, monomer. Mn(2+) serves as cofactor.

The enzyme catalyses (2R)-2-phosphoglycerate = (2R)-3-phosphoglycerate. It functions in the pathway carbohydrate degradation; glycolysis; pyruvate from D-glyceraldehyde 3-phosphate: step 3/5. Functionally, catalyzes the interconversion of 2-phosphoglycerate and 3-phosphoglycerate. This chain is 2,3-bisphosphoglycerate-independent phosphoglycerate mutase, found in Shewanella halifaxensis (strain HAW-EB4).